The primary structure comprises 367 residues: UDP-N-acetylglucosamine--N-acetylmuramyl-(pentapeptide) pyrophosphoryl-undecaprenol N-acetylglucosamine transferase (367 aa).

UDP-N-acetyl-alpha-D-glucosamine-binding positions include 13-15, asparagine 125, arginine 165, serine 192, and glutamine 293; that span reads TGG.

Belongs to the glycosyltransferase 28 family. MurG subfamily.

The protein resides in the cell inner membrane. The catalysed reaction is di-trans,octa-cis-undecaprenyl diphospho-N-acetyl-alpha-D-muramoyl-L-alanyl-D-glutamyl-meso-2,6-diaminopimeloyl-D-alanyl-D-alanine + UDP-N-acetyl-alpha-D-glucosamine = di-trans,octa-cis-undecaprenyl diphospho-[N-acetyl-alpha-D-glucosaminyl-(1-&gt;4)]-N-acetyl-alpha-D-muramoyl-L-alanyl-D-glutamyl-meso-2,6-diaminopimeloyl-D-alanyl-D-alanine + UDP + H(+). It functions in the pathway cell wall biogenesis; peptidoglycan biosynthesis. Functionally, cell wall formation. Catalyzes the transfer of a GlcNAc subunit on undecaprenyl-pyrophosphoryl-MurNAc-pentapeptide (lipid intermediate I) to form undecaprenyl-pyrophosphoryl-MurNAc-(pentapeptide)GlcNAc (lipid intermediate II). The polypeptide is UDP-N-acetylglucosamine--N-acetylmuramyl-(pentapeptide) pyrophosphoryl-undecaprenol N-acetylglucosamine transferase (Jannaschia sp. (strain CCS1)).